A 648-amino-acid polypeptide reads, in one-letter code: Bifunctional protein TilS/HprT (648 aa).

29 to 34 serves as a coordination point for ATP; sequence SGGPDS. Asp-627 provides a ligand contact to Mg(2+).

This sequence in the N-terminal section; belongs to the tRNA(Ile)-lysidine synthase family. It in the C-terminal section; belongs to the purine/pyrimidine phosphoribosyltransferase family. Requires Mg(2+) as cofactor.

The protein localises to the cytoplasm. The enzyme catalyses IMP + diphosphate = hypoxanthine + 5-phospho-alpha-D-ribose 1-diphosphate. It catalyses the reaction GMP + diphosphate = guanine + 5-phospho-alpha-D-ribose 1-diphosphate. It carries out the reaction cytidine(34) in tRNA(Ile2) + L-lysine + ATP = lysidine(34) in tRNA(Ile2) + AMP + diphosphate + H(+). Ligates lysine onto the cytidine present at position 34 of the AUA codon-specific tRNA(Ile) that contains the anticodon CAU, in an ATP-dependent manner. Cytidine is converted to lysidine, thus changing the amino acid specificity of the tRNA from methionine to isoleucine. This is Bifunctional protein TilS/HprT (tilS/hprT) from Listeria monocytogenes serovar 1/2a (strain ATCC BAA-679 / EGD-e).